The chain runs to 211 residues: Protein YCF54, chloroplastic (211 aa).

The N-terminal 80 residues, 1–80 (MWSVTGALTV…GESTKYHFLV (80 aa)), are a transit peptide targeting the chloroplast.

This sequence belongs to the ycf54 family. As to quaternary structure, interacts with LFNR1 and CRD1/CHL27 in chloroplasts.

It localises to the plastid. The protein resides in the chloroplast. Functionally, involved in the biosynthesis of chlorophyll; acts probably as a scaffolding factor in the MgProto monomethylester (MgProtoME) cyclase complex to stabilize CRD1/CHL27, the catalytic subunit which catalyzes the formation of a fifth isocyclic ring to tetrapyrroles to form protochlorophyllide. This chain is Protein YCF54, chloroplastic, found in Arabidopsis thaliana (Mouse-ear cress).